We begin with the raw amino-acid sequence, 394 residues long: HORMA domain-containing protein 1 (394 aa).

The HORMA domain maps to 24 to 226 (HQSLVLVKRL…TPFHIFKVKV (203 aa)). Basic and acidic residues predominate over residues 253–282 (ILRDKDVEDEQEHYTSDDLDIETKMEEQEK). The interval 253 to 394 (ILRDKDVEDE…RKFSEPKEHI (142 aa)) is disordered. Residues 288–300 (ELEEPSLVCEEDE) show a composition bias toward acidic residues. Composition is skewed to polar residues over residues 310-324 (LSISHSQVEQLVNKT) and 343-352 (KMANGNQPVK). Residues 362–374 (QHESGRIVLHHFD) show a composition bias toward basic and acidic residues. Position 376 is a phosphoserine (serine 376). The Nuclear localization signal signature appears at 383 to 386 (KRRK).

In terms of assembly, interacts with HORMAD2. Interacts with IHO1. In terms of processing, phosphorylated at Ser-377 in a SPO11-dependent manner. As to expression, testis-specific. Over-expressed in carcinomas.

It is found in the nucleus. The protein resides in the chromosome. In terms of biological role, plays a key role in meiotic progression. Regulates 3 different functions during meiosis: ensures that sufficient numbers of processed DNA double-strand breaks (DSBs) are available for successful homology search by increasing the steady-state numbers of single-stranded DSB ends. Promotes synaptonemal-complex formation independently of its role in homology search. Plays a key role in the male mid-pachytene checkpoint and the female meiotic prophase checkpoint: required for efficient build-up of ATR activity on unsynapsed chromosome regions, a process believed to form the basis of meiotic silencing of unsynapsed chromatin (MSUC) and meiotic prophase quality control in both sexes. The protein is HORMA domain-containing protein 1 of Homo sapiens (Human).